Here is a 131-residue protein sequence, read N- to C-terminus: Profilin-1 (131 aa).

This sequence belongs to the profilin family. As to quaternary structure, occurs in many kinds of cells as a complex with monomeric actin in a 1:1 ratio.

It localises to the cytoplasm. The protein localises to the cytoskeleton. Its function is as follows. Binds to actin and affects the structure of the cytoskeleton. At high concentrations, profilin prevents the polymerization of actin, whereas it enhances it at low concentrations. By binding to PIP2, it inhibits the formation of IP3 and DG. This is Profilin-1 from Lilium longiflorum (Trumpet lily).